The primary structure comprises 3661 residues: Serine/threonine-protein kinase SMG1 (3661 aa).

Positions 1–11 are enriched in low complexity; the sequence is MSRRAPGSRLS. 2 disordered regions span residues 1–101 and 116–144; these read MSRR…TYGR and PEFT…MSYS. The interaction with SMG8 and SMG9 stretch occupies residues 1–1977; the sequence is MSRRAPGSRL…GVLLQQHMYV (1977 aa). Positions 26–35 are enriched in polar residues; sequence NDWQPRTDSA. Composition is skewed to basic and acidic residues over residues 69–86 and 129–138; these read QRHD…DEKG and ATKDMRKSQE. K173 is subject to N6-acetyllysine. Residues 1154 to 1165 show a composition bias toward polar residues; the sequence is RNSASPKHSLNG. The interval 1154-1175 is disordered; sequence RNSASPKHSLNGESRKTVLSKP. The region spanning 1283 to 1866 is the FAT domain; sequence RELQKSIEVQ…LYPAIVGTIS (584 aa). Residues 1817–1852 form an HEAT repeat; it reads APWRGIIPQLFSRLNHPEVYVRQSICNLLCRVAQDS. Positions 1898–1919 are disordered; it reads ECEGGSPPASQDSNKDEPKSGL. The PI3K/PI4K catalytic domain occupies 2124–2463; sequence VGGTITILPT…MEREITRSLF (340 aa). The G-loop stretch occupies residues 2130 to 2136; sequence ILPTKTK. Residues 2332 to 2340 are catalytic loop; sequence GLGDRHLDN. The activation loop stretch occupies residues 2352–2376; that stretch reads HIDYNVCFEKGKSLRVPEKVPFRMT. Position 3550 is a phosphothreonine (T3550). A phosphoserine mark is found at S3556 and S3570. Residues 3568 to 3579 are compositionally biased toward polar residues; that stretch reads ATSADTPPSTVP. Residues 3568–3591 form a disordered region; it reads ATSADTPPSTVPGTGKSVACSPKK. 2 positions are modified to phosphothreonine: T3573 and T3577. One can recognise an FATC domain in the interval 3629 to 3661; it reads RRMSVAEQVDYVIKEATNLDNLAQLYEGWTAWV.

The protein belongs to the PI3/PI4-kinase family. Component of the SMG1C complex composed of SMG1, SMG8 and SMG9; the recruitment of SMG8 to SMG1 N-terminus induces a large conformational change in the SMG1 C-terminal head domain containing the catalytic domain. Component of the transient SURF (SMG1-UPF1-eRF1-eRF3) complex. Part of a complex composed of SMG1, DHX34 and UPF1; within the complex DHX34 acts as a scaffolding protein to facilitate SMG1 phosphorylation of UPF1. Interacts with PRKCI. Interacts with TELO2 and TTI1. Interacts with RUVBL1 and RUVBL2. Interacts with UPF2. Interacts with DHX34 (via C-terminus); the interaction is RNA-independent. Mn(2+) is required as a cofactor. Post-translationally, autophosphorylated. Widely expressed, with highest level in heart and skeletal muscle. Expressed in placenta, brain, lung and spleen, but not in liver.

The protein resides in the nucleus. It localises to the cytoplasm. The catalysed reaction is L-seryl-[protein] + ATP = O-phospho-L-seryl-[protein] + ADP + H(+). It carries out the reaction L-threonyl-[protein] + ATP = O-phospho-L-threonyl-[protein] + ADP + H(+). Inhibited by caffeine, LY294002 and wortmannin. In terms of biological role, serine/threonine protein kinase involved in both mRNA surveillance and genotoxic stress response pathways. Recognizes the substrate consensus sequence [ST]-Q. Plays a central role in nonsense-mediated decay (NMD) of mRNAs containing premature stop codons by phosphorylating UPF1/RENT1. Recruited by release factors to stalled ribosomes together with SMG8 and SMG9 (forming the SMG1C protein kinase complex), and UPF1 to form the transient SURF (SMG1-UPF1-eRF1-eRF3) complex. In EJC-dependent NMD, the SURF complex associates with the exon junction complex (EJC) through UPF2 and allows the formation of an UPF1-UPF2-UPF3 surveillance complex which is believed to activate NMD. Also acts as a genotoxic stress-activated protein kinase that displays some functional overlap with ATM. Can phosphorylate p53/TP53 and is required for optimal p53/TP53 activation after cellular exposure to genotoxic stress. Its depletion leads to spontaneous DNA damage and increased sensitivity to ionizing radiation (IR). May activate PRKCI but not PRKCZ. The polypeptide is Serine/threonine-protein kinase SMG1 (Homo sapiens (Human)).